Consider the following 504-residue polypeptide: Endochitinase (504 aa).

A signal peptide spans 1 to 22 (MNRTTLILFFIILSNTITVIHG). A GH18 domain is found at 23–392 (YVRGCYYTNW…NAISSELEGE (370 aa)). Residues cysteine 27 and cysteine 52 are joined by a disulfide bond. Chitin is bound by residues 78-79 (TE) and 105-108 (GGYN). The active-site Proton donor is the glutamate 148. Chitin-binding positions include tyrosine 149, 212–215 (MSYD), and tryptophan 362. Residues 389–450 (LEGESENPEI…YDTDETEGQE (62 aa)) are disordered. Over residues 396–408 (PEITTEEPSITET) the composition is skewed to low complexity. Tandem repeats lie at residues 407–420 (ETEA…EETS) and 421–434 (ETEA…EETS). Residues 407 to 448 (ETEAYETDETEETSETEAYDTDETEETSETEATTYDTDETEG) are 3 X 14 AA approximate tandem repeats of E-T-E-A-Y-[ED]-T-D-E-T-E-E-T-S. Acidic residues predominate over residues 409-435 (EAYETDETEETSETEAYDTDETEETSE). The 3; approximate repeat unit spans residues 435-448 (ETEATTYDTDETEG). The region spanning 448 to 504 (GQECPERDGLFPHPTDCHLFIQCANNIAYVMQCPATTFFNDAIKVCDHMTNAPDTCI) is the Chitin-binding type-2 domain. An intrachain disulfide couples cysteine 480 to cysteine 493.

Belongs to the glycosyl hydrolase 18 family. Chitinase class II subfamily. Post-translationally, O-glycosylated.

It catalyses the reaction Random endo-hydrolysis of N-acetyl-beta-D-glucosaminide (1-&gt;4)-beta-linkages in chitin and chitodextrins.. Microfilarial chitinase, which may function to degrade chitin-containing structures in the micro-filaria or in its mosquito vector during parasite development and transmission. The sequence is that of Endochitinase from Brugia malayi (Filarial nematode worm).